The chain runs to 339 residues: HTH-type transcriptional regulator PtxS (339 aa).

Residues 12 to 67 form the HTH lacI-type domain; sequence VTISEVARVAGVSKATVSRYIGGDRQLLAEATAKRLEEVIERLGYRPNQMARGLKR. Positions 14–33 form a DNA-binding region, H-T-H motif; the sequence is ISEVARVAGVSKATVSRYIG.

In terms of assembly, homodimer in solution.

Its activity is regulated as follows. 2-ketogluconate acts as a molecular effector and causes dissociation of PtxS from its target promoter. In terms of biological role, negatively regulates glucose metabolism by binding directly to the promoter region of the kgu and gad operons. It also negatively regulates its own synthesis. The chain is HTH-type transcriptional regulator PtxS from Pseudomonas putida (strain ATCC 47054 / DSM 6125 / CFBP 8728 / NCIMB 11950 / KT2440).